Consider the following 339-residue polypeptide: Adenylosuccinate synthetase (339 aa).

GTP is bound by residues 12 to 18 (GDEGKGS) and 42 to 44 (GHS). Aspartate 13 acts as the Proton acceptor in catalysis. Positions 13 and 42 each coordinate Mg(2+). Residues 13–16 (DEGK), 40–43 (NAGH), threonine 127, arginine 141, glutamine 179, threonine 194, and arginine 256 contribute to the IMP site. Histidine 43 (proton donor) is an active-site residue. 252–258 (TVTGRRR) contacts substrate. Residues arginine 258, 284-286 (MLD), and 324-326 (KTG) each bind GTP.

It belongs to the adenylosuccinate synthetase family. In terms of assembly, homodimer. Mg(2+) serves as cofactor.

The protein resides in the cytoplasm. The enzyme catalyses IMP + L-aspartate + GTP = N(6)-(1,2-dicarboxyethyl)-AMP + GDP + phosphate + 2 H(+). It participates in purine metabolism; AMP biosynthesis via de novo pathway; AMP from IMP: step 1/2. Plays an important role in the de novo pathway of purine nucleotide biosynthesis. Catalyzes the first committed step in the biosynthesis of AMP from IMP. This is Adenylosuccinate synthetase from Pyrococcus horikoshii (strain ATCC 700860 / DSM 12428 / JCM 9974 / NBRC 100139 / OT-3).